A 211-amino-acid polypeptide reads, in one-letter code: Protein-L-isoaspartate O-methyltransferase (211 aa).

Ser-60 is an active-site residue.

Belongs to the methyltransferase superfamily. L-isoaspartyl/D-aspartyl protein methyltransferase family.

It localises to the cytoplasm. The catalysed reaction is [protein]-L-isoaspartate + S-adenosyl-L-methionine = [protein]-L-isoaspartate alpha-methyl ester + S-adenosyl-L-homocysteine. Catalyzes the methyl esterification of L-isoaspartyl residues in peptides and proteins that result from spontaneous decomposition of normal L-aspartyl and L-asparaginyl residues. It plays a role in the repair and/or degradation of damaged proteins. The chain is Protein-L-isoaspartate O-methyltransferase from Pseudomonas fluorescens (strain ATCC BAA-477 / NRRL B-23932 / Pf-5).